Reading from the N-terminus, the 490-residue chain is MATETEVVAPVTVSNGGSKGCCKYGGPGYATPLAAMSGPSEKLIYVTAVYTGTGIDKPDYLATVDVDPSSPSYSSVIHRLPMPFVGDELHHSGWNSCSSCHGDASVDRRYLVLPSLISGRIYAIDTKENPRAPSLYKYVDPKEIADKTGLAFPHTAHCLATGEILVSCLGDEEGNAKGNGFLLLDSDFNIKNRWEKPGHSPLYGYDFWYQPRHKTMISTSWGAPKAFSKGFNLQHVADGLYGSHLHVYSWPGGEIKQLIDLGPTGLLPLEIRFLHDPSKDTGFVGSALSSNMIRFFKNSDETWSHEVVISVKPLKVENWILPEMPGLITDFLISLDDRFIYFVNWLHGDIRQYNIEDPKNPVLTGQIWVGGLLQKGSPVKAVGEDGNTFQFEVPQIKGKSLRGGPQMIQLSLDGKRLYATNSLFSAWDRQFYPEIMEKGSHIIQIDVDTEKGGLTINPDFFVDFGDEPDGPSLAHEMRYPGGDCTSDIWI.

A2 carries the N-acetylalanine modification. Selenite contacts are provided by C21 and C22.

It belongs to the selenium-binding protein family. In terms of assembly, interacts with GRXS14 and GRXS16. Interacts with DALL3. As to expression, expressed in seedlings, roots, leaves, stems and flowers.

Functionally, binds cadmium and mediates lower sensitivity to stress requiring glutathione (GSH) for tolerance (e.g. cadmium, selenate, and hydrogen peroxide excess). Probably helps to detoxify cadmium potentially through direct binding. Binds selenium, cadmium, zinc and nickel in vitro. The sequence is that of Selenium-binding protein 1 from Arabidopsis thaliana (Mouse-ear cress).